A 390-amino-acid polypeptide reads, in one-letter code: 1-acyl-sn-glycerol-3-phosphate acyltransferase 2 (390 aa).

A helical membrane pass occupies residues 2–22 (AMAAAVIVPLGILFFISGLVV). The HXXXXD motif motif lies at 91-96 (HRSDID). Transmembrane regions (helical) follow at residues 305–325 (LAVV…FLHW) and 333–353 (KGIA…QILI). Residues 358 to 390 (SERSTPAKVAPAKPKDNHQSGPSSQTEVEEKQK) form a disordered region.

Belongs to the 1-acyl-sn-glycerol-3-phosphate acyltransferase family.

It localises to the endoplasmic reticulum membrane. The enzyme catalyses a 1-acyl-sn-glycero-3-phosphate + an acyl-CoA = a 1,2-diacyl-sn-glycero-3-phosphate + CoA. It functions in the pathway phospholipid metabolism; CDP-diacylglycerol biosynthesis; CDP-diacylglycerol from sn-glycerol 3-phosphate: step 2/3. Converts lysophosphatidic acid (LPA) into phosphatidic acid by incorporating acyl moiety at the 2 position. In Brassica napus (Rape), this protein is 1-acyl-sn-glycerol-3-phosphate acyltransferase 2 (LPAT2).